The chain runs to 379 residues: Gap junction alpha-1 protein (379 aa).

The Cytoplasmic segment spans residues 2-23 (GDWSALGRLLDKVQAYSTAGGK). Residues 24 to 44 (VWLSVLFIFRILLLGTAVESA) form a helical membrane-spanning segment. Topologically, residues 45 to 76 (WGDEQSAFVCNTQQPGCENVCYDKSFPISHVR) are extracellular. Cystine bridges form between C54-C192 and C187-C198. A helical transmembrane segment spans residues 77–97 (FWVLQIIFVSTPTLLYLAHVF). Residues 98–163 (YLMRKEEKLN…TYIISILFKS (66 aa)) are Cytoplasmic-facing. Residues 164 to 184 (VFEVGFIIIQWYMYGFSLSAI) form a helical membrane-spanning segment. The Extracellular portion of the chain corresponds to 185-207 (YTCKRDPCPHQVDCFLSRPTEKT). Residues 208–228 (IFIWFMLIVSIVSLALNIIEL) traverse the membrane as a helical segment. At 229-379 (FYVTYKSIKD…SRPRPDDLEI (151 aa)) the chain is on the cytoplasmic side. The interval 322-379 (STISNTHAQPFDFSDEHQNTKKMAPGHEMQPLTILDQRPSSRASSHASSRPRPDDLEI) is disordered. Residues 359 to 371 (RPSSRASSHASSR) show a composition bias toward low complexity.

The protein belongs to the connexin family. Alpha-type (group II) subfamily. A connexon is composed of a hexamer of connexins. Interacts with TMEM65. As to expression, expressed in most tissues. Highest levels found in eye and brain.

It is found in the cell membrane. The protein localises to the cell junction. It localises to the gap junction. Its function is as follows. One gap junction consists of a cluster of closely packed pairs of transmembrane channels, the connexons, through which materials of low MW diffuse from one cell to a neighboring cell. Plays an essential role in gap junction communication in the ventricles. The sequence is that of Gap junction alpha-1 protein (gja1) from Xenopus laevis (African clawed frog).